The sequence spans 135 residues: Large ribosomal subunit protein uL16c (135 aa).

The protein belongs to the universal ribosomal protein uL16 family. Part of the 50S ribosomal subunit.

It localises to the plastid. It is found in the chloroplast. This Lactuca sativa (Garden lettuce) protein is Large ribosomal subunit protein uL16c.